We begin with the raw amino-acid sequence, 305 residues long: Tyrosine recombinase XerD (305 aa).

In terms of domain architecture, Core-binding (CB) spans M9–H94. The Tyr recombinase domain occupies R115–S299. Active-site residues include R155, K179, H251, R254, and H277. The active-site O-(3'-phospho-DNA)-tyrosine intermediate is Y286.

The protein belongs to the 'phage' integrase family. XerD subfamily. Forms a cyclic heterotetrameric complex composed of two molecules of XerC and two molecules of XerD.

Its subcellular location is the cytoplasm. Site-specific tyrosine recombinase, which acts by catalyzing the cutting and rejoining of the recombining DNA molecules. The XerC-XerD complex is essential to convert dimers of the bacterial chromosome into monomers to permit their segregation at cell division. It also contributes to the segregational stability of plasmids. The protein is Tyrosine recombinase XerD of Vibrio vulnificus (strain CMCP6).